A 499-amino-acid chain; its full sequence is Potassium voltage-gated channel subfamily A member 2 (499 aa).

The tract at residues 1–26 is disordered; that stretch reads MTVATGDPVDEAAALPGHPQDTYDPE. Residues 1–125 form a tetramerization domain region; the sequence is MTVATGDPVD…YELGEEAMEM (125 aa). At 1–160 the chain is on the cytoplasmic side; that stretch reads MTVATGDPVD…LLFEYPESSG (160 aa). The helical transmembrane segment at 161 to 182 threads the bilayer; it reads PARIIAIVSVMVILISIVSFCL. Over 183–221 the chain is Extracellular; sequence ETLPIFRDENEDMHGGGVTFHTYSNSTIGYQQSTSFTDP. An N-linked (GlcNAc...) asparagine glycan is attached at asparagine 207. The chain crosses the membrane as a helical span at residues 222-243; it reads FFIVETLCIIWFSFEFLVRFFA. Cysteine 244 carries S-palmitoyl cysteine lipidation. The Cytoplasmic segment spans residues 244–254; that stretch reads CPSKAGFFTNI. The helical transmembrane segment at 255-275 threads the bilayer; sequence MNIIDIVAIIPYFITLGTELA. Residues 276-289 lie on the Extracellular side of the membrane; sequence EKPEDAQQGQQAMS. A helical; Voltage-sensor transmembrane segment spans residues 290–310; it reads LAILRVIRLVRVFRIFKLSRH. Residues 311-325 lie on the Cytoplasmic side of the membrane; sequence SKGLQILGQTLKASM. The S4-S5 linker stretch occupies residues 312 to 325; the sequence is KGLQILGQTLKASM. Residues 326–347 form a helical membrane-spanning segment; that stretch reads RELGLLIFFLFIGVILFSSAVY. Residues 348 to 361 lie on the Extracellular side of the membrane; it reads FAEADERDSQFPSI. Positions 362-373 form an intramembrane region, helical; sequence PDAFWWAVVSMT. A Selectivity filter motif is present at residues 374–379; the sequence is TVGYGD. Residues 374–381 lie within the membrane without spanning it; the sequence is TVGYGDMV. Residues 382–388 lie on the Extracellular side of the membrane; that stretch reads PTTIGGK. The chain crosses the membrane as a helical span at residues 389-417; that stretch reads IVGSLCAIAGVLTIALPVPVIVSNFNYFY. The Cytoplasmic segment spans residues 418 to 499; that stretch reads HRETEGEEQA…VNITKMLTDV (82 aa). Residue tyrosine 429 is modified to Phosphotyrosine. 4 positions are modified to phosphoserine: serine 434, serine 440, serine 441, and serine 449. Position 458 is a phosphotyrosine (tyrosine 458). The residue at position 468 (serine 468) is a Phosphoserine. A PDZ-binding motif is present at residues 497-499; sequence TDV.

Belongs to the potassium channel family. A (Shaker) (TC 1.A.1.2) subfamily. Kv1.2/KCNA2 sub-subfamily. As to quaternary structure, homotetramer and heterotetramer with other channel-forming alpha subunits, such as KCNA1, KCNA4, KCNA5, KCNA6 and KCNA7. Channel activity is regulated by interaction with beta subunits, including KCNAB1 and KCNAB2. Identified in a complex with KCNA1 and KCNAB2. Identified in a complex with KCNA5 and KCNAB1. Identified in a complex with KCNA4 and FYN. Interacts with PTK2B. Interacts (via C-terminus) with CTTN. Interacts with ADAM22. Interacts with CNTNAP2. Interacts (via C-terminus) with the PDZ domains of DLG1, DLG2 and DLG4. Interacts (via N-terminal cytoplasmic domain) with RHOA (GTP-bound form); this regulates channel activity by reducing location at the cell surface in response to CHRM1 activation. Interacts with DRD2. Interacts with SIGMAR1; cocaine consumption leads to increased interaction. Interacts with ADAM11. Interacts with LYNX1. Post-translationally, phosphorylated on tyrosine residues; phosphorylation increases in response to ischemia. Phosphorylated on tyrosine residues by activated PTK2B/PYK2. Phosphorylation on tyrosine residues suppresses ion channel activity. Phosphorylated on tyrosine residues in response to CHRM1 activation; this abolishes interaction with CTTN. This is probably due to endocytosis of the phosphorylated channel subunits. Phosphorylated on serine residues in response to increased cAMP levels; phosphorylation is apparently not catalyzed by PKA. In terms of processing, N-glycosylated, with complex, sialylated N-glycans. Detected in brain. Detected in cerebellum. Detected in mitral cells in the olfactory bulb. Detected in cochlea. Detected in cerebellum, particularly in the basket cell axon plexus and in the terminal regions around Purkinje cells (at protein level). Detected in juxtaparanodal regions in sciatic nerve. Detected in Schwann cells from sciatic nerve. Detected in dopamine neurons in substantia nigra. Detected in large myelinated fibers in juxtaparanodes in the CA3 and CA1 areas of the hippocampus. Detected in brain, in punctae on fiber tracts in brain stem and spinal cord, and on axons in the juxtaparanodal regions of the node of Ranvier (at protein level). Detected in dopamine neurons in the midbrain.

It is found in the cell membrane. It localises to the membrane. Its subcellular location is the cell projection. The protein resides in the axon. The protein localises to the synapse. It is found in the endoplasmic reticulum membrane. It localises to the lamellipodium membrane. Its subcellular location is the synaptosome. The protein resides in the presynaptic cell membrane. The protein localises to the dendrite. It is found in the perikaryon. It localises to the cell junction. Its subcellular location is the paranodal septate junction. The enzyme catalyses K(+)(in) = K(+)(out). Its activity is regulated as follows. Inhibited by 4-aminopyridine (4-AP), dendrotoxin (DTX) and charybdotoxin (CTX), but not by tetraethylammonium (TEA). Inhibited by tityustoxin-K alpha (TsTX-Kalpha), a toxin that is highly specific for KCNA2. Inhibited by maurotoxin. Inhibited by kappaM conotoxins kappaM-RIIIJ and kappaM-RIIIK. In terms of biological role, voltage-gated potassium channel that mediates transmembrane potassium transport in excitable membranes, primarily in the brain and the central nervous system, but also in the cardiovascular system. Prevents aberrant action potential firing and regulates neuronal output. Forms tetrameric potassium-selective channels through which potassium ions pass in accordance with their electrochemical gradient. The channel alternates between opened and closed conformations in response to the voltage difference across the membrane. Can form functional homotetrameric channels and heterotetrameric channels that contain variable proportions of KCNA1, KCNA2, KCNA4, KCNA5, KCNA6, KCNA7, and possibly other family members as well; channel properties depend on the type of alpha subunits that are part of the channel. Channel properties are modulated by cytoplasmic beta subunits that regulate the subcellular location of the alpha subunits and promote rapid inactivation of delayed rectifier potassium channels. In vivo, membranes probably contain a mixture of heteromeric potassium channel complexes, making it difficult to assign currents observed in intact tissues to any particular potassium channel family member. Homotetrameric KCNA2 forms a delayed-rectifier potassium channel that opens in response to membrane depolarization, followed by slow spontaneous channel closure. In contrast, a heteromultimer formed by KCNA2 and KCNA4 shows rapid inactivation. Contributes to the regulation of action potentials in neurons. KCNA2-containing channels play a presynaptic role and prevent hyperexcitability and aberrant action potential firing. Response to toxins that are selective for KCNA1, respectively for KCNA2, suggests that heteromeric potassium channels composed of both KCNA1 and KCNA2 play a role in pacemaking and regulate the output of deep cerebellar nuclear neurons. Response to toxins that are selective for KCNA2-containing potassium channels suggests that in Purkinje cells, dendritic subthreshold KCNA2-containing potassium channels prevent random spontaneous calcium spikes, suppressing dendritic hyperexcitability without hindering the generation of somatic action potentials, and thereby play an important role in motor coordination. KCNA2-containing channels play a role in GABAergic transmission from basket cells to Purkinje cells in the cerebellum, and thereby play an import role in motor coordination. Plays a role in the induction of long-term potentiation of neuron excitability in the CA3 layer of the hippocampus. May function as down-stream effector for G protein-coupled receptors and inhibit GABAergic inputs to basolateral amygdala neurons. May contribute to the regulation of neurotransmitter release, such as gamma-aminobutyric acid (GABA). Contributes to the regulation of the axonal release of the neurotransmitter dopamine. Reduced KCNA2 expression plays a role in the perception of neuropathic pain after peripheral nerve injury, but not acute pain. Plays a role in the regulation of the time spent in non-rapid eye movement (NREM) sleep. The chain is Potassium voltage-gated channel subfamily A member 2 (Kcna2) from Mus musculus (Mouse).